Consider the following 419-residue polypeptide: MQLLNFGLLLLPFVAGDLAPQPEPLLAGPSDVVPGQYIVTLKEGLTSAQIRDHKKWVSSVHRANLDSFAAGASGVETEGIMKHFHIHDLNMYSGGFDEKTVEDLSRNPYVKSVHPDQHVYLAKTVTQRQARWGLGYMSSKGKPVPLHSTLVDYSYDDKAGEGVWAYVLDTGINVNHIEFEGRAILGHNAIPNKPHTDEFGHGTYVAGIIAGKTYGVAKKANVVSAKAFDTGSSTYNYILETYDWIVRNITDSNRKNKAVINLSISGAKYQPFDDAVEKAFKAGITTVVAAGNDGKDAKNNTPASSPNAITVGAVRWENTRPSFSNYGKLVDIWAPGELIKSCWKGGNNATSTQSGTSAASPHVAGLVAYLMSIENLPSPSAVTARVLNLTIPNLVKDAKDSPNRVAYNGIQERKFKLPK.

A signal peptide spans 1 to 16; sequence MQLLNFGLLLLPFVAG. Positions 17 to 122 are excised as a propeptide; that stretch reads DLAPQPEPLL…VHPDQHVYLA (106 aa). The 87-residue stretch at 36-122 folds into the Inhibitor I9 domain; the sequence is QYIVTLKEGL…VHPDQHVYLA (87 aa). One can recognise a Peptidase S8 domain in the interval 131–419; it reads RWGLGYMSSK…IQERKFKLPK (289 aa). Residues D169 and H201 each act as charge relay system in the active site. 3 N-linked (GlcNAc...) asparagine glycosylation sites follow: N248, N261, and N348. S357 acts as the Charge relay system in catalysis. A glycan (N-linked (GlcNAc...) asparagine) is linked at N388.

It belongs to the peptidase S8 family.

It is found in the secreted. Secreted subtilisin-like serine protease with keratinolytic activity that contributes to pathogenicity. This Trichophyton verrucosum (Cattle ringworm fungus) protein is Subtilisin-like protease 2 (SUB2).